The chain runs to 424 residues: Keratin, type I cytoskeletal 20 (424 aa).

The head stretch occupies residues 1 to 69 (MDFSRRSFHR…TGGGDLFVGN (69 aa)). Ser13 carries the phosphoserine; by MAPKAPK2, MAPKAPK3 and PKC modification. The coil 1A stretch occupies residues 70 to 105 (EKMAMQNLNDRLASYLEKVRTLEQSNSKLEVQIKQW). An IF rod domain is found at 70–381 (EKMAMQNLND…RLLEGEDVKT (312 aa)). The interval 106-123 (YETNAPRAGRDYSAYYRQ) is linker 1. The segment at 124–215 (IEELRSQIKD…KEHQEEVDGL (92 aa)) is coil 1B. The linker 12 stretch occupies residues 216-238 (HKHLGNTVNVEVDAAPGLNLGVI). Positions 239 to 377 (MNEMRQKYEV…ATYRRLLEGE (139 aa)) are coil 2. The tail stretch occupies residues 378 to 424 (DVKTTEYQLSTLEERDIKKTRKIKTVVQEVVDGKVVSSEVKEVEENI).

The protein belongs to the intermediate filament family. In terms of assembly, heterotetramer of two type I and two type II keratins. Associates with KRT8. Hyperphosphorylation at Ser-13 occurs during the early stages of apoptosis but becomes less prominent during the later stages. Phosphorylation at Ser-13 also increases in response to stress brought on by cell injury. Post-translationally, proteolytically cleaved by caspases during apoptosis. Cleavage occurs at Asp-228. Expressed predominantly in the intestinal epithelium. Expressed in luminal cells of colonic mucosa. Also expressed in the Merkel cells of keratinized oral mucosa; specifically at the tips of some rete ridges of the gingival mucosa, in the basal layer of the palatal mucosa and in the taste buds of lingual mucosa.

It localises to the cytoplasm. Plays a significant role in maintaining keratin filament organization in intestinal epithelia. When phosphorylated, plays a role in the secretion of mucin in the small intestine. The sequence is that of Keratin, type I cytoskeletal 20 (KRT20) from Homo sapiens (Human).